A 340-amino-acid chain; its full sequence is Tryptophan--tRNA ligase (340 aa).

Residues 11–13 (RPT) and 19–20 (GH) each bind ATP. A 'HIGH' region motif is present at residues 12–20 (PTGKLHLGH). D140 is an L-tryptophan binding site. ATP contacts are provided by residues 152–154 (GND), L194, and 202–206 (KMSKS). Positions 202-206 (KMSKS) match the 'KMSKS' region motif.

It belongs to the class-I aminoacyl-tRNA synthetase family. Homodimer.

It localises to the cytoplasm. The catalysed reaction is tRNA(Trp) + L-tryptophan + ATP = L-tryptophyl-tRNA(Trp) + AMP + diphosphate + H(+). Catalyzes the attachment of tryptophan to tRNA(Trp). The protein is Tryptophan--tRNA ligase of Streptococcus mutans serotype c (strain ATCC 700610 / UA159).